Reading from the N-terminus, the 101-residue chain is Small ribosomal subunit protein eS24 (101 aa).

The protein belongs to the eukaryotic ribosomal protein eS24 family.

The chain is Small ribosomal subunit protein eS24 from Methanosarcina acetivorans (strain ATCC 35395 / DSM 2834 / JCM 12185 / C2A).